A 93-amino-acid polypeptide reads, in one-letter code: Parbolysin P4 (93 aa).

3 disulfide bridges follow: cysteine 16–cysteine 37, cysteine 22–cysteine 33, and cysteine 47–cysteine 60.

This sequence belongs to the worm cytolysin family. As to expression, localized within the skin and proboscis and are most readily isolated from body mucus secretions.

The protein localises to the secreted. In terms of biological role, cytolysin that shows hemolytic activity (on bovine erythrocytes, HC(50)=5.75 mg/ml). This hemolytic activity is completely inhibited by small unilamelar vesicles composed of PC/PG, PC/PI and PC/PS in 1:1 molar ratios (with at least 100 mg/ml concentration). The sequence is that of Parbolysin P4 from Parborlasia corrugatus (Antarctic nemertean worm).